The following is a 576-amino-acid chain: Proline--tRNA ligase (576 aa).

It belongs to the class-II aminoacyl-tRNA synthetase family. ProS type 1 subfamily. In terms of assembly, homodimer.

It localises to the cytoplasm. It carries out the reaction tRNA(Pro) + L-proline + ATP = L-prolyl-tRNA(Pro) + AMP + diphosphate. Functionally, catalyzes the attachment of proline to tRNA(Pro) in a two-step reaction: proline is first activated by ATP to form Pro-AMP and then transferred to the acceptor end of tRNA(Pro). As ProRS can inadvertently accommodate and process non-cognate amino acids such as alanine and cysteine, to avoid such errors it has two additional distinct editing activities against alanine. One activity is designated as 'pretransfer' editing and involves the tRNA(Pro)-independent hydrolysis of activated Ala-AMP. The other activity is designated 'posttransfer' editing and involves deacylation of mischarged Ala-tRNA(Pro). The misacylated Cys-tRNA(Pro) is not edited by ProRS. In Finegoldia magna (strain ATCC 29328 / DSM 20472 / WAL 2508) (Peptostreptococcus magnus), this protein is Proline--tRNA ligase.